A 324-amino-acid chain; its full sequence is Biotin synthase (324 aa).

One can recognise a Radical SAM core domain in the interval 42–269 (NEVQISSLLN…KSYIRLAAGR (228 aa)). [4Fe-4S] cluster-binding residues include Cys57, Cys61, and Cys64. [2Fe-2S] cluster contacts are provided by Cys101, Cys132, Cys192, and Arg264.

The protein belongs to the radical SAM superfamily. Biotin synthase family. As to quaternary structure, homodimer. [4Fe-4S] cluster is required as a cofactor. It depends on [2Fe-2S] cluster as a cofactor.

The catalysed reaction is (4R,5S)-dethiobiotin + (sulfur carrier)-SH + 2 reduced [2Fe-2S]-[ferredoxin] + 2 S-adenosyl-L-methionine = (sulfur carrier)-H + biotin + 2 5'-deoxyadenosine + 2 L-methionine + 2 oxidized [2Fe-2S]-[ferredoxin]. It functions in the pathway cofactor biosynthesis; biotin biosynthesis; biotin from 7,8-diaminononanoate: step 2/2. In terms of biological role, catalyzes the conversion of dethiobiotin (DTB) to biotin by the insertion of a sulfur atom into dethiobiotin via a radical-based mechanism. The sequence is that of Biotin synthase from Ehrlichia canis (strain Jake).